The chain runs to 497 residues: O-acetyltransferase PaAT-1 (497 aa).

N-linked (GlcNAc...) asparagine glycosylation occurs at N35. The next 9 helical transmembrane spans lie at 69-89 (GISATCVVVHHCTLQWFGWHI), 107-127 (LLISGSPHVYIFFVISGYSLS), 157-177 (LFVPTTIVTFFCAIMTQLNWY), 241-261 (LWTLPVEFNSSMVLLMFLMAF), 278-298 (VLFQCFFIYWALFLFFSGMLI), 329-349 (AIGVGCFVLSLCALSTPHLAF), 375-395 (PIAAIGLVLTLDHHPFLQVLF), 406-426 (ISFALFLVHGPLLNTLGHALG), and 443-463 (VAISLTAMVFWLMTILLADFV).

It belongs to the acyltransferase 3 family.

It is found in the membrane. The protein operates within mycotoxin biosynthesis. Its function is as follows. O-acetyltransferase; part of the 2 gene clusters that mediate the biosynthesis of fusicoccins, diterpene glucosides that display phytohormone-like activity and function as potent activators of plasma membrane H(+)-ATPases in plants by modifying 14-3-3 proteins and cause the plant disease constriction canker. The first step in the pathway is performed by the fusicoccadiene synthase PaFS that possesses both prenyl transferase and terpene cyclase activity, converting isopentenyl diphosphate and dimethylallyl diphosphate into geranylgeranyl diphosphate (GGDP) and successively converting GGDP into fusicocca-2,10(14)-diene, a precursor for fusicoccin H. The second step is the oxidation at the C-8 position by the cytochrome P450 monooxygenase PaP450-2 to yield fusicocca-2,10(14)-diene-8-beta-ol. The cytochrome P450 monooxygenase PaP450-1 then catalyzes the hydroxylation at the C-16 position to produce fusicocca-2,10(14)-diene-8-beta,16-diol. The dioxygenase fc-dox then catalyzes the 16-oxydation of fusicocca-2,10(14)-diene-8-beta,16-diol to yield an aldehyde (8-beta-hydroxyfusicocca-1,10(14)-dien-16-al). The short-chain dehydrogenase/reductase fc-sdr catalyzes the reduction of the aldehyde to yield fusicocca-1,10(14)-diene-8-beta,16-diol. The next step is the hydroxylation at C-9 performed by the cytochrome P450 monooxygenase PaP450-3 that leads to fusicoccin H aglycon which is glycosylated to fusicoccin H by the O-glycosyltransferase PaGT. Hydroxylation at C-12 by the cytochrome P450 monooxygenase PaP450-4 leads then to the production of fusicoccin Q and is followed by methylation by the O-methyltransferase PaMT to yield fusicoccin P. Fusicoccin P is further converted to fusicoccin J via prenylation by the O-glucose prenyltransferase PaPT. Cytochrome P450 monooxygenase PaP450-5 then performs hydroxylation at C-19 to yield dideacetyl-fusicoccin A which is acetylated to 3'-O-deacetyl-fusicoccin A by the O-acetyltransferase PaAT-2. Finally, a another acetylation by the O-acetyltransferase PaAT-1 yields fusicoccin A. This chain is O-acetyltransferase PaAT-1, found in Phomopsis amygdali (Fusicoccum amygdali).